A 380-amino-acid chain; its full sequence is 3-isopropylmalate dehydratase large subunit (380 aa).

[4Fe-4S] cluster is bound by residues Cys-262, Cys-320, and Cys-323.

The protein belongs to the aconitase/IPM isomerase family. LeuC type 2 subfamily. As to quaternary structure, heterodimer of LeuC and LeuD. [4Fe-4S] cluster is required as a cofactor.

The catalysed reaction is (2R,3S)-3-isopropylmalate = (2S)-2-isopropylmalate. The protein operates within amino-acid biosynthesis; L-leucine biosynthesis; L-leucine from 3-methyl-2-oxobutanoate: step 2/4. Functionally, catalyzes the isomerization between 2-isopropylmalate and 3-isopropylmalate, via the formation of 2-isopropylmaleate. This Pyrococcus horikoshii (strain ATCC 700860 / DSM 12428 / JCM 9974 / NBRC 100139 / OT-3) protein is 3-isopropylmalate dehydratase large subunit.